A 246-amino-acid polypeptide reads, in one-letter code: Probable cytokinin riboside 5'-monophosphate phosphoribohydrolase LOGL5 (246 aa).

The span at 1–10 shows a compositional bias: basic and acidic residues; it reads MMMENSREQQ. The segment at 1 to 28 is disordered; the sequence is MMMENSREQQPESSPANNNSKKKKKKKT. Substrate is bound by residues E103, 121 to 122, 138 to 144, and T150; these read RK and GYGTLEE.

Belongs to the LOG family. In terms of tissue distribution, expressed in roots and leaves.

It carries out the reaction N(6)-(dimethylallyl)adenosine 5'-phosphate + H2O = N(6)-dimethylallyladenine + D-ribose 5-phosphate. It catalyses the reaction 9-ribosyl-trans-zeatin 5'-phosphate + H2O = trans-zeatin + D-ribose 5-phosphate. Functionally, cytokinin-activating enzyme working in the direct activation pathway. Phosphoribohydrolase that converts inactive cytokinin nucleotides to the biologically active free-base forms. This chain is Probable cytokinin riboside 5'-monophosphate phosphoribohydrolase LOGL5 (LOGL5), found in Oryza sativa subsp. japonica (Rice).